Here is a 483-residue protein sequence, read N- to C-terminus: Probable glycine dehydrogenase (decarboxylating) subunit 2 (483 aa).

Positions 1–24 (MLIFDHSRPGRTAAAQLPATGGDL) are disordered. Lys264 is modified (N6-(pyridoxal phosphate)lysine).

It belongs to the GcvP family. C-terminal subunit subfamily. In terms of assembly, the glycine cleavage system is composed of four proteins: P, T, L and H. In this organism, the P 'protein' is a heterodimer of two subunits. Requires pyridoxal 5'-phosphate as cofactor.

The catalysed reaction is N(6)-[(R)-lipoyl]-L-lysyl-[glycine-cleavage complex H protein] + glycine + H(+) = N(6)-[(R)-S(8)-aminomethyldihydrolipoyl]-L-lysyl-[glycine-cleavage complex H protein] + CO2. The glycine cleavage system catalyzes the degradation of glycine. The P protein binds the alpha-amino group of glycine through its pyridoxal phosphate cofactor; CO(2) is released and the remaining methylamine moiety is then transferred to the lipoamide cofactor of the H protein. The chain is Probable glycine dehydrogenase (decarboxylating) subunit 2 from Thiobacillus denitrificans (strain ATCC 25259 / T1).